We begin with the raw amino-acid sequence, 151 residues long: Methylglyoxal synthase (151 aa).

The MGS-like domain occupies 1–151; sequence MKKTTRTMAA…DYQAYLAERT (151 aa). Residues His19, Lys23, 45–48, and 65–66 each bind substrate; these read TGTT and SG. Asp71 acts as the Proton donor/acceptor in catalysis. Substrate is bound at residue His98.

It belongs to the methylglyoxal synthase family.

It catalyses the reaction dihydroxyacetone phosphate = methylglyoxal + phosphate. Its function is as follows. Catalyzes the formation of methylglyoxal from dihydroxyacetone phosphate. This chain is Methylglyoxal synthase, found in Vibrio cholerae serotype O1 (strain ATCC 39541 / Classical Ogawa 395 / O395).